Here is a 231-residue protein sequence, read N- to C-terminus: 2-C-methyl-D-erythritol 4-phosphate cytidylyltransferase (231 aa).

Belongs to the IspD/TarI cytidylyltransferase family. IspD subfamily.

The enzyme catalyses 2-C-methyl-D-erythritol 4-phosphate + CTP + H(+) = 4-CDP-2-C-methyl-D-erythritol + diphosphate. Its pathway is isoprenoid biosynthesis; isopentenyl diphosphate biosynthesis via DXP pathway; isopentenyl diphosphate from 1-deoxy-D-xylulose 5-phosphate: step 2/6. Functionally, catalyzes the formation of 4-diphosphocytidyl-2-C-methyl-D-erythritol from CTP and 2-C-methyl-D-erythritol 4-phosphate (MEP). This Clostridium kluyveri (strain NBRC 12016) protein is 2-C-methyl-D-erythritol 4-phosphate cytidylyltransferase.